A 560-amino-acid chain; its full sequence is Aluminum-activated malate transporter 12 (560 aa).

6 helical membrane-spanning segments follow: residues 54 to 74 (VGLSLTLVSLLYLMEPLFKGI), 78 to 98 (AIWAVMTVVVVLEFSAGATLC), 104 to 124 (GLGTLIAGSLAFFIEFVANDS), 130 to 150 (AIFIGTAVFIIGAAATYIRFI), 156 to 176 (NYDYGVVIFLLTFNLITVSSY), and 189 to 209 (FYTIAVGCGICLFMSLLVFPI). The tract at residues 386–421 (LHRHNNKHQNGSISNNKHHQRNSSNSGKDLNGDVSL) is disordered. Over residues 407-421 (NSSNSGKDLNGDVSL) the composition is skewed to polar residues.

The protein belongs to the aromatic acid exporter (TC 2.A.85) family. Expressed in roots, stems, leaves, flowers and pollen. Mainly detected in the roots vascular stele and in the leaves guard cells.

It localises to the cell membrane. In terms of biological role, malate-sensitive anion transporter permeable to chloride, nitrate, sulfate and malate. Involved in dark-, CO(2)-, abscisic acid- and water-deficient-induced stomatal closure. Belongs to the R-type anion channels. This Arabidopsis thaliana (Mouse-ear cress) protein is Aluminum-activated malate transporter 12 (ALMT12).